The sequence spans 656 residues: Vacuolar amino acid transporter 3 (656 aa).

Positions 1–109 are disordered; that stretch reads MSNSQSIKIK…VPSTSEDPDV (109 aa). Polar residues predominate over residues 15 to 28; it reads NENFASGSYSSRRS. Serine 37 and serine 53 each carry phosphoserine. The segment covering 50–71 has biased composition (polar residues); it reads ISPSESNLPNNVAENTTDTPVN. The segment covering 75–97 has biased composition (basic and acidic residues); it reads IRDENHNSRKGKDVTLNSDEAHS. Serine 172 carries the post-translational modification Phosphoserine. A run of 11 helical transmembrane segments spans residues 280 to 300, 307 to 327, 351 to 371, 389 to 409, 419 to 439, 457 to 477, 494 to 514, 537 to 557, 578 to 598, 601 to 621, and 636 to 656; these read AVLL…PKAF, FSSA…LLLI, FAIL…YISF, EYHL…LSLV, ALIA…WDVI, FSLF…ILPI, VMAA…AAFG, LYAI…IAII, YLRV…SSRL, FVSM…PPML, and DIFM…MTFF.

This sequence belongs to the amino acid/polyamine transporter 2 family.

The protein resides in the endoplasmic reticulum membrane. Its subcellular location is the vacuole membrane. Its function is as follows. Involved in amino acid efflux from the vacuole to the cytoplasm. Capable of transporting large neutral amino acids including tyrosine, glutamine, asparagine, isoleucine and leucine. Required for spore formation. In Schizosaccharomyces pombe (strain 972 / ATCC 24843) (Fission yeast), this protein is Vacuolar amino acid transporter 3 (avt3).